A 354-amino-acid chain; its full sequence is Rhodopsin (354 aa).

Topologically, residues 1–36 (MNGTEGENFYVPMSNKTGVVRSPFDYPQYYLGEPWM) are extracellular. N-linked (GlcNAc...) asparagine glycosylation is found at asparagine 2 and asparagine 15. The chain crosses the membrane as a helical span at residues 37–61 (FSALAAYMFFLILTGLPVNFLTLFV). The Cytoplasmic portion of the chain corresponds to 62–73 (TIQHKKLRQPLN). The helical transmembrane segment at 74–96 (YILLNLAVSDLFMVFGGFTTTII) threads the bilayer. The Extracellular portion of the chain corresponds to 97-110 (TSMNGYFIFGPAGC). Cysteines 110 and 187 form a disulfide. The helical transmembrane segment at 111 to 133 (NFEGFFATLGGEVGLWCLVVLAI) threads the bilayer. The short motif at 134 to 136 (ERY) is the 'Ionic lock' involved in activated form stabilization element. The Cytoplasmic segment spans residues 134–152 (ERYMVVCKPMANFRFGSQH). Residues 153–173 (AIIGVVFTWIMALSCAGPPLV) form a helical membrane-spanning segment. The Extracellular portion of the chain corresponds to 174 to 202 (GWSRYIPEGLQCSCGVDYYTMKPEVNNES). The chain crosses the membrane as a helical span at residues 203–224 (FVIYMFVVHFTIPLIVIFFCYG). The Cytoplasmic portion of the chain corresponds to 225-252 (RLVCTVKEAAAQQQESESTQRAEREVTR). A helical membrane pass occupies residues 253-274 (MVIIMVVAFLICWVPYASVAFY). Over 275–286 (IFINQGCDFTPF) the chain is Extracellular. The chain crosses the membrane as a helical span at residues 287–308 (FMTVPAFFAKSSAVYNPLIYIL). N6-(retinylidene)lysine is present on lysine 296. Over 309–354 (MNKQFRNCMITTICLGKNPFEEEESTSASASKTEASSVSSSQVAPA) the chain is Cytoplasmic. The S-palmitoyl cysteine moiety is linked to residue cysteine 322. Residues 333–354 (STSASASKTEASSVSSSQVAPA) are disordered. A compositionally biased stretch (low complexity) spans 334-354 (TSASASKTEASSVSSSQVAPA).

It belongs to the G-protein coupled receptor 1 family. Opsin subfamily. In terms of processing, phosphorylated on some or all of the serine and threonine residues present in the C-terminal region. Contains one covalently linked retinal chromophore.

The protein localises to the membrane. Its subcellular location is the cell projection. It is found in the cilium. The protein resides in the photoreceptor outer segment. Its function is as follows. Photoreceptor required for image-forming vision at low light intensity. While most salt water fish species use retinal as chromophore, most freshwater fish use 3-dehydroretinal, or a mixture of retinal and 3-dehydroretinal. Light-induced isomerization of 11-cis to all-trans retinal triggers a conformational change that activates signaling via G-proteins. Subsequent receptor phosphorylation mediates displacement of the bound G-protein alpha subunit by arrestin and terminates signaling. The protein is Rhodopsin (rho) of Leucoraja erinaceus (Little skate).